We begin with the raw amino-acid sequence, 197 residues long: ATP-dependent Clp protease proteolytic subunit (197 aa).

Serine 98 serves as the catalytic Nucleophile. Histidine 123 is a catalytic residue.

This sequence belongs to the peptidase S14 family. As to quaternary structure, fourteen ClpP subunits assemble into 2 heptameric rings which stack back to back to give a disk-like structure with a central cavity, resembling the structure of eukaryotic proteasomes.

The protein resides in the cytoplasm. The enzyme catalyses Hydrolysis of proteins to small peptides in the presence of ATP and magnesium. alpha-casein is the usual test substrate. In the absence of ATP, only oligopeptides shorter than five residues are hydrolyzed (such as succinyl-Leu-Tyr-|-NHMec, and Leu-Tyr-Leu-|-Tyr-Trp, in which cleavage of the -Tyr-|-Leu- and -Tyr-|-Trp bonds also occurs).. Its function is as follows. Cleaves peptides in various proteins in a process that requires ATP hydrolysis. Has a chymotrypsin-like activity. Plays a major role in the degradation of misfolded proteins. This Natranaerobius thermophilus (strain ATCC BAA-1301 / DSM 18059 / JW/NM-WN-LF) protein is ATP-dependent Clp protease proteolytic subunit.